The sequence spans 170 residues: Probable chorismate pyruvate-lyase (170 aa).

Substrate-binding residues include R77, L114, and E157.

It belongs to the UbiC family.

It is found in the cytoplasm. It carries out the reaction chorismate = 4-hydroxybenzoate + pyruvate. It participates in cofactor biosynthesis; ubiquinone biosynthesis. Its function is as follows. Removes the pyruvyl group from chorismate, with concomitant aromatization of the ring, to provide 4-hydroxybenzoate (4HB) for the ubiquinone pathway. The polypeptide is Probable chorismate pyruvate-lyase (Pasteurella multocida (strain Pm70)).